The chain runs to 445 residues: KICSTOR subunit 2 (445 aa).

The protein belongs to the KICS2 family. As to quaternary structure, part of the KICSTOR complex composed of KPTN, ITFG2, KICS2 and SZT2. SZT2 probably serves as a link between the other three proteins in the KICSTOR complex and may mediate the direct interaction with the GATOR complex via GATOR1. The KICSTOR complex interacts directly with the GATOR1 complex and most probably indirectly with the GATOR2 complex in an amino acid-independent manner.

It localises to the lysosome membrane. In terms of biological role, as part of the KICSTOR complex functions in the amino acid-sensing branch of the TORC1 signaling pathway. Recruits, in an amino acid-independent manner, the GATOR1 complex to the lysosomal membranes and allows its interaction with GATOR2 and the RAG GTPases. Functions upstream of the RAG GTPases and is required to negatively regulate mTORC1 signaling in absence of amino acids. In absence of the KICSTOR complex mTORC1 is constitutively localized to the lysosome and activated. The KICSTOR complex is also probably involved in the regulation of mTORC1 by glucose. In Mus musculus (Mouse), this protein is KICSTOR subunit 2.